Reading from the N-terminus, the 138-residue chain is Nucleoside diphosphate kinase (138 aa).

ATP is bound by residues Lys9, Phe57, Arg85, Thr91, Arg102, and Asn112. The Pros-phosphohistidine intermediate role is filled by His120.

This sequence belongs to the NDK family. In terms of assembly, homotetramer. Mg(2+) is required as a cofactor.

Its subcellular location is the cytoplasm. It carries out the reaction a 2'-deoxyribonucleoside 5'-diphosphate + ATP = a 2'-deoxyribonucleoside 5'-triphosphate + ADP. The catalysed reaction is a ribonucleoside 5'-diphosphate + ATP = a ribonucleoside 5'-triphosphate + ADP. Its function is as follows. Major role in the synthesis of nucleoside triphosphates other than ATP. The ATP gamma phosphate is transferred to the NDP beta phosphate via a ping-pong mechanism, using a phosphorylated active-site intermediate. The sequence is that of Nucleoside diphosphate kinase from Streptococcus agalactiae serotype V (strain ATCC BAA-611 / 2603 V/R).